The chain runs to 91 residues: Large ribosomal subunit protein bL27 (91 aa).

A disordered region spans residues 1–24 (MAHKKGVGSSRNGRDSNPKMRGVK).

The protein belongs to the bacterial ribosomal protein bL27 family.

This is Large ribosomal subunit protein bL27 from Chloroflexus aggregans (strain MD-66 / DSM 9485).